The following is a 495-amino-acid chain: Phytochrome A type 5 (495 aa).

Residues 1–21 show a composition bias toward low complexity; sequence MSSSRPASSSSSRNRQSSQAR. A disordered region spans residues 1-24; sequence MSSSRPASSSSSRNRQSSQARVLA. The 186-residue stretch at 217 to 402 folds into the GAF domain; sequence SMEMLCNTVV…VFAVHVNREF (186 aa). Phytochromobilin is bound at residue cysteine 322.

The protein belongs to the phytochrome family. As to quaternary structure, homodimer. Post-translationally, contains one covalently linked phytochromobilin chromophore.

Its function is as follows. Regulatory photoreceptor which exists in two forms that are reversibly interconvertible by light: the Pr form that absorbs maximally in the red region of the spectrum and the Pfr form that absorbs maximally in the far-red region. Photoconversion of Pr to Pfr induces an array of morphogenic responses, whereas reconversion of Pfr to Pr cancels the induction of those responses. Pfr controls the expression of a number of nuclear genes including those encoding the small subunit of ribulose-bisphosphate carboxylase, chlorophyll A/B binding protein, protochlorophyllide reductase, rRNA, etc. It also controls the expression of its own gene(s) in a negative feedback fashion. The chain is Phytochrome A type 5 (PHYA5) from Avena sativa (Oat).